The primary structure comprises 524 residues: Hydroxysteroid dehydrogenase-like protein 2 (524 aa).

NADP(+)-binding positions include 17 to 23 (GASRGIG), Lys-42, and Asp-74. Residue Lys-42 is modified to N6-(2-hydroxyisobutyryl)lysine. An N6-acetyllysine modification is found at Lys-116. Catalysis depends on Tyr-168, which acts as the Proton acceptor. Lys-172 contacts NADP(+). Over residues 283-300 (EEKESYDPVPEVKEEKLQ) the composition is skewed to basic and acidic residues. The segment at 283 to 410 (EEKESYDPVP…PLLQSVLPPK (128 aa)) is disordered. Over residues 301–391 (LQEQPQLQEQ…QQQPQQRPQQ (91 aa)) the composition is skewed to low complexity. One can recognise an SCP2 domain in the interval 414–521 (GAVEETFRIV…KLEKLMTHMN (108 aa)). Lys-424 carries the N6-succinyllysine modification.

The protein belongs to the short-chain dehydrogenases/reductases (SDR) family.

Its subcellular location is the peroxisome. It localises to the mitochondrion. Its function is as follows. Has apparently no steroid dehydrogenase activity. Controls bile acid (BA) and lipid metabolism in response to nutritional cues. This chain is Hydroxysteroid dehydrogenase-like protein 2 (Hsdl2), found in Rattus norvegicus (Rat).